Reading from the N-terminus, the 209-residue chain is MIAIIDYGMGNIRSVEQALKYIGAEHIVTSDKEEILRSDGVILPGVGAFPKAMEVLEERDLVCVLKEVCDIGKPLLGICLGMQLLFERSEELKGCSGLGLLPGEIRKLKVSYKIPHMGWNELRKEREFPLWNGLVDGSFVYYVHSYYADCPDEIVCGVSDYGMQVPGFVAKGNVFGAQFHPEKSGEIGMQILKNFQGVVEAWKSSRLSI.

Residues 1 to 205 (MIAIIDYGMG…QGVVEAWKSS (205 aa)) form the Glutamine amidotransferase type-1 domain. Cysteine 79 acts as the Nucleophile in catalysis. Residues histidine 180 and glutamate 182 contribute to the active site.

As to quaternary structure, heterodimer of HisH and HisF.

The protein resides in the cytoplasm. The catalysed reaction is 5-[(5-phospho-1-deoxy-D-ribulos-1-ylimino)methylamino]-1-(5-phospho-beta-D-ribosyl)imidazole-4-carboxamide + L-glutamine = D-erythro-1-(imidazol-4-yl)glycerol 3-phosphate + 5-amino-1-(5-phospho-beta-D-ribosyl)imidazole-4-carboxamide + L-glutamate + H(+). It carries out the reaction L-glutamine + H2O = L-glutamate + NH4(+). The protein operates within amino-acid biosynthesis; L-histidine biosynthesis; L-histidine from 5-phospho-alpha-D-ribose 1-diphosphate: step 5/9. Functionally, IGPS catalyzes the conversion of PRFAR and glutamine to IGP, AICAR and glutamate. The HisH subunit catalyzes the hydrolysis of glutamine to glutamate and ammonia as part of the synthesis of IGP and AICAR. The resulting ammonia molecule is channeled to the active site of HisF. The sequence is that of Imidazole glycerol phosphate synthase subunit HisH from Bacillus cereus (strain G9842).